The following is a 504-amino-acid chain: Plasma protease C1 inhibitor (504 aa).

Positions methionine 1–serine 22 are cleaved as a signal peptide. The tract at residues serine 22–threonine 67 is disordered. Basic and acidic residues predominate over residues alanine 39–serine 51. N-linked (GlcNAc...) asparagine glycosylation is found at asparagine 75, asparagine 83, and asparagine 107. The segment covering serine 85–threonine 124 has biased composition (polar residues). The segment at serine 85–aspartate 141 is disordered. Intrachain disulfides connect cysteine 128–cysteine 432 and cysteine 135–cysteine 210. N-linked (GlcNAc...) asparagine glycans are attached at residues asparagine 243 and asparagine 356.

Belongs to the serpin family. Interacts with MASP1.

It localises to the secreted. Its function is as follows. Serine protease inhibitor, which acrs as a regulator of the classical complement pathway. Forms a proteolytically inactive stoichiometric complex with the C1r or C1s proteases. May also regulate blood coagulation, fibrinolysis and the generation of kinins. Very efficient inhibitor of FXIIa. Inhibits chymotrypsin and kallikrein. The protein is Plasma protease C1 inhibitor (Serping1) of Mus musculus (Mouse).